The primary structure comprises 247 residues: uncharacterized protein (247 aa).

This is an uncharacterized protein from Archaeoglobus fulgidus (strain ATCC 49558 / DSM 4304 / JCM 9628 / NBRC 100126 / VC-16).